A 51-amino-acid chain; its full sequence is rpoE leader peptide (51 aa).

Its function is as follows. A short protein whose stop codon overlaps with the start codon of downstream rpoE; a premature stop codon at position 12 results in decreased expression of ECF sigma factor RpoE, thus they are translationally coupled. The sequence is that of rpoE leader peptide from Escherichia coli (strain K12).